A 173-amino-acid chain; its full sequence is Flavodoxin (173 aa).

In terms of domain architecture, Flavodoxin-like spans isoleucine 2 to valine 168.

This sequence belongs to the flavodoxin family. FMN serves as cofactor.

Low-potential electron donor to a number of redox enzymes. The polypeptide is Flavodoxin (Chondrus crispus (Carrageen Irish moss)).